A 495-amino-acid chain; its full sequence is Lanosterol 14-alpha demethylase erg11 (495 aa).

Residues 2–22 (AFSLVSILLSIALAWYVGYII) traverse the membrane as a helical segment. Residue Cys442 participates in heme binding.

The protein belongs to the cytochrome P450 family. As to quaternary structure, interacts with dap1. Requires heme as cofactor.

It localises to the endoplasmic reticulum. It is found in the membrane. It catalyses the reaction a 14alpha-methyl steroid + 3 reduced [NADPH--hemoprotein reductase] + 3 O2 = a Delta(14) steroid + formate + 3 oxidized [NADPH--hemoprotein reductase] + 4 H2O + 4 H(+). It carries out the reaction a 14alpha-methyl steroid + reduced [NADPH--hemoprotein reductase] + O2 = a 14alpha-hydroxymethyl steroid + oxidized [NADPH--hemoprotein reductase] + H2O + H(+). The enzyme catalyses a 14alpha-hydroxymethyl steroid + reduced [NADPH--hemoprotein reductase] + O2 = a 14alpha-formyl steroid + oxidized [NADPH--hemoprotein reductase] + 2 H2O + H(+). The catalysed reaction is a 14alpha-formyl steroid + reduced [NADPH--hemoprotein reductase] + O2 = a Delta(14) steroid + formate + oxidized [NADPH--hemoprotein reductase] + H2O + 2 H(+). It catalyses the reaction lanosterol + 3 reduced [NADPH--hemoprotein reductase] + 3 O2 = 4,4-dimethyl-5alpha-cholesta-8,14,24-trien-3beta-ol + formate + 3 oxidized [NADPH--hemoprotein reductase] + 4 H2O + 4 H(+). It carries out the reaction lanosterol + reduced [NADPH--hemoprotein reductase] + O2 = 32-hydroxylanosterol + oxidized [NADPH--hemoprotein reductase] + H2O + H(+). The enzyme catalyses 32-hydroxylanosterol + reduced [NADPH--hemoprotein reductase] + O2 = 32-oxolanosterol + oxidized [NADPH--hemoprotein reductase] + 2 H2O + H(+). The catalysed reaction is 32-oxolanosterol + reduced [NADPH--hemoprotein reductase] + O2 = 4,4-dimethyl-5alpha-cholesta-8,14,24-trien-3beta-ol + formate + oxidized [NADPH--hemoprotein reductase] + H2O + 2 H(+). It catalyses the reaction eburicol + 3 reduced [NADPH--hemoprotein reductase] + 3 O2 = 14-demethyleburicol + formate + 3 oxidized [NADPH--hemoprotein reductase] + 4 H2O + 4 H(+). It carries out the reaction eburicol + reduced [NADPH--hemoprotein reductase] + O2 = 32-hydroxyeburicol + oxidized [NADPH--hemoprotein reductase] + H2O + H(+). The enzyme catalyses 32-hydroxyeburicol + reduced [NADPH--hemoprotein reductase] + O2 = 32-oxoeburicol + oxidized [NADPH--hemoprotein reductase] + 2 H2O + H(+). The catalysed reaction is 32-oxoeburicol + reduced [NADPH--hemoprotein reductase] + O2 = 14-demethyleburicol + formate + oxidized [NADPH--hemoprotein reductase] + H2O + 2 H(+). It participates in steroid biosynthesis; zymosterol biosynthesis; zymosterol from lanosterol: step 1/6. Its pathway is steroid metabolism; ergosterol biosynthesis. Its function is as follows. Sterol 14alpha-demethylase that plays a critical role in the third module of ergosterol biosynthesis pathway, being ergosterol the major sterol component in fungal membranes that participates in a variety of functions. The third module or late pathway involves the ergosterol synthesis itself through consecutive reactions that mainly occur in the endoplasmic reticulum (ER) membrane. In filamentous fungi, during the initial step of this module, lanosterol (lanosta-8,24-dien-3beta-ol) can be metabolized to eburicol. Sterol 14alpha-demethylase catalyzes the three-step oxidative removal of the 14alpha-methyl group (C-32) of both these sterols in the form of formate, and converts eburicol and lanosterol to 14-demethyleburicol (4,4,24-trimethylergosta-8,14,24(28)-trienol) and 4,4-dimethyl-5alpha-cholesta-8,14,24-trien-3beta-ol, respectively, which are further metabolized by other enzymes in the pathway to ergosterol. Can also use substrates not intrinsic to fungi, such as 24,25-dihydrolanosterol (DHL), producing 4,4-dimethyl-8,14-cholestadien-3-beta-ol, but at lower rates than the endogenous substrates. In Schizosaccharomyces pombe (strain 972 / ATCC 24843) (Fission yeast), this protein is Lanosterol 14-alpha demethylase erg11.